Here is a 517-residue protein sequence, read N- to C-terminus: Cytochrome P450 monooxygenase TRI4 (517 aa).

Residues A15–L37 form a helical membrane-spanning segment. A glycan (N-linked (GlcNAc...) asparagine) is linked at N444. C452 is a heme binding site.

It belongs to the cytochrome P450 family. Requires heme as cofactor.

The protein resides in the membrane. It participates in sesquiterpene biosynthesis; trichothecene biosynthesis. Cytochrome P450 monooxygenase; part of the gene cluster that mediates the production of the antimicrobial trichothecene harzianum A (HA) that plays a role in Botrytis cinerea antagonistic activity and plant defense priming. The biosynthesis of harzianum A begins with the cyclization of farnesyl diphosphate to trichodiene and is catalyzed by the trichodiene synthase TRI5. Trichodiene undergoes a series of oxygenations catalyzed by the cytochrome P450 monooxygenase TRI4. TRI4 controls the addition of 3 oxygens at C-2, C-11, and the C-12, C-13-epoxide to form the intermediate isotrichodiol. Isotrichodiol then undergoes a non-enzymatic isomerization and cyclization to form 12,13-epoxytrichothec-9-ene (EPT) which is further converted to trichodermol by the cytochrome P450 monooxygenase TRI11 via C-4 hydroxylation. The last step of HA synthesis is esterification of an octatriendioyl moiety to the C-4 oxygen of trichodermol. The octatriendioyl moiety is probably produced by the polyketide synthase TRI17 and the esterification performed by the trichothecene O-acetyltransferase TRI3. This chain is Cytochrome P450 monooxygenase TRI4, found in Trichoderma arundinaceum.